The sequence spans 2169 residues: Voltage-dependent L-type calcium channel subunit alpha-1C (2169 aa).

Residues 1–153 lie on the Cytoplasmic side of the membrane; it reads MVPLVQPTTP…RACISIVEWK (153 aa). Residues 76–97 are calmodulin-binding; sequence GAALSWQAAIDAGRQAKLMGSA. A compositionally biased stretch (polar residues) spans 98-108; sequence GNTTISTVSST. The interval 98 to 127 is disordered; that stretch reads GNTTISTVSSTQRKRQQYGKPKKQSGTTAT. Residues 109–120 are compositionally biased toward basic residues; the sequence is QRKRQQYGKPKK. The I repeat unit spans residues 140-437; that stretch reads NPIRRACISI…LVLGVLSGEF (298 aa). Residues 154–172 traverse the membrane as a helical segment; sequence PFEIIILLTIFANCVALAI. At 173 to 187 the chain is on the extracellular side; sequence YIPFPEDDSNATNSN. N-linked (GlcNAc...) asparagine glycosylation occurs at Asn-182. Residues 188-208 form a helical membrane-spanning segment; that stretch reads LERVEYLFLIIFTVEAFLKVI. The Cytoplasmic portion of the chain corresponds to 209–217; sequence AYGLLFHPN. The helical transmembrane segment at 218–238 threads the bilayer; sequence AYLRNGWNLLDFIIVVVGLFS. The Extracellular segment spans residues 239-261; sequence AILEQATKADGANALGGKGAGFD. Residues 262-280 traverse the membrane as a helical segment; the sequence is VKALRAFRVLRPLRLVSGV. At 281–297 the chain is on the cytoplasmic side; the sequence is PSLQVVLNSIIKAMVPL. A helical transmembrane segment spans residues 298-319; sequence LHTALLVLFVIIIYAIIGLELF. Topologically, residues 320–379 are extracellular; that stretch reads MGKMHKTCYNQEGITDVPAEEDPSPCALESGHGRQCQNGTVCKPGWDGPKHGITNFDNFA. A disulfide bridge connects residues Cys-345 and Cys-361. A glycan (N-linked (GlcNAc...) asparagine) is linked at Asn-357. Positions 380 to 401 form an intramembrane region, pore-forming; sequence FAMLTVFQCITMEGWTDVLYWM. A Selectivity filter of repeat I motif is present at residues 390 to 393; the sequence is TMEG. Glu-392 lines the Ca(2+) pocket. Topologically, residues 402 to 409 are extracellular; the sequence is QDAMGYEL. The helical transmembrane segment at 410-430 threads the bilayer; it reads PWVYFVSLVIFGSFFVLNLVL. Topologically, residues 431–553 are cytoplasmic; sequence GVLSGEFSKE…RKCRAAVKSN (123 aa). Positions 457 to 474 are AID/alpha-interaction domain; mediates interaction with the beta subunit; sequence QQLEEDLKGYLDWITQAE. The segment at 478–510 is disordered; it reads PENEDEGVDEEKPRNMSMPTSETESVNTENVAG. A compositionally biased stretch (polar residues) spans 494–507; that stretch reads SMPTSETESVNTEN. Ser-498 bears the Phosphoserine mark. A Phosphothreonine modification is found at Thr-505. The stretch at 539 to 785 is one II repeat; sequence NRFCRRKCRA…VFLAIAVDNL (247 aa). Residues 554–572 traverse the membrane as a helical segment; the sequence is VFYWLVIFLVFLNTLTIAS. The Extracellular segment spans residues 573 to 583; that stretch reads EHYNQPHWLTE. The helical transmembrane segment at 584–604 threads the bilayer; sequence VQDTANKALLALFTAEMLLKM. At 605 to 615 the chain is on the cytoplasmic side; sequence YSLGLQAYFVS. A helical transmembrane segment spans residues 616–635; that stretch reads LFNRLDCFIVCGGILETILV. Residues 636-644 are Extracellular-facing; it reads ETKIMSPLG. Residues 645-663 form a helical membrane-spanning segment; that stretch reads ISVLRCVRLLRIFKITRYW. The Cytoplasmic portion of the chain corresponds to 664–682; sequence NSLSNLVASLLNSVRSIAS. A helical membrane pass occupies residues 683-702; the sequence is LLLLLFLFIIIFSLLGMQLF. Residues 703-722 lie on the Extracellular side of the membrane; it reads GGKFNFDEMRTRRSTFDNFP. Positions 723 to 744 form an intramembrane region, pore-forming; the sequence is QSLLTVFQILTGEDWNSVMYDG. The Selectivity filter of repeat II signature appears at 733 to 736; that stretch reads TGED. A Ca(2+)-binding site is contributed by Glu-735. At 745 to 754 the chain is on the extracellular side; sequence IMAYGGPSFP. A helical transmembrane segment spans residues 755-774; sequence GMLVCIYFIILFICGNYILL. Topologically, residues 775–929 are cytoplasmic; the sequence is NVFLAIAVDN…LQCHRIVNDT (155 aa). Positions 793 to 890 are disordered; sequence SAQKEEEEEK…EMPVGPRPRP (98 aa). A compositionally biased stretch (basic and acidic residues) spans 812–835; sequence SPEKKQEVVEKPAVEETKEEKIEL. Phosphoserine occurs at positions 837 and 844. The tract at residues 858–905 is interaction with STAC2; sequence NENEDKSPYPNPDAAGEEDEEEPEMPVGPRPRPLSELHLKEKAVPMPE. The span at 872 to 881 shows a compositional bias: acidic residues; sequence AGEEDEEEPE. Residues 916 to 1198 form an III repeat; the sequence is NRFRLQCHRI…IFVGFVIVTF (283 aa). The chain crosses the membrane as a helical span at residues 930 to 948; the sequence is IFTNLILFFILLSSISLAA. Over 949 to 960 the chain is Extracellular; it reads EDPVQHTSFRNH. Residues 961-980 form a helical membrane-spanning segment; sequence ILFYFDIVFTTIFTIEIALK. The Cytoplasmic portion of the chain corresponds to 981-996; sequence MTAYGAFLHKGSFCRN. A helical membrane pass occupies residues 997–1015; sequence YFNILDLLVVSVSLISFGI. Topologically, residues 1016-1022 are extracellular; the sequence is QSSAINV. The helical transmembrane segment at 1023–1041 threads the bilayer; that stretch reads VKILRVLRVLRPLRAINRA. The Cytoplasmic segment spans residues 1042 to 1060; sequence KGLKHVVQCVFVAIRTIGN. A helical transmembrane segment spans residues 1061-1080; it reads IVIVTTLLQFMFACIGVQLF. Residues 1081–1130 lie on the Extracellular side of the membrane; the sequence is KGKLYTCSDSSKQTEAECKGNYITYKDGEVDQPIIQPRSWENSKFDFDNV. A disulfide bridge links Cys-1087 with Cys-1098. The dihydropyridine binding stretch occupies residues 1118 to 1207; sequence RSWENSKFDF…FQEQGEQEYK (90 aa). Positions 1131 to 1151 form an intramembrane region, pore-forming; the sequence is LAAMMALFTVSTFEGWPELLY. The Selectivity filter of repeat III motif lies at 1142–1145; it reads TFEG. Residue Glu-1144 coordinates Ca(2+). Residues 1152–1168 are Extracellular-facing; sequence RSIDSHTEDKGPIYNYR. A helical transmembrane segment spans residues 1169–1190; it reads VEISIFFIIYIIIIAFFMMNIF. The Cytoplasmic portion of the chain corresponds to 1191–1248; that stretch reads VGFVIVTFQEQGEQEYKNCELDKNQRQCVEYALKARPLRRYIPKNQHQYKVWYVVNST. Residues 1235–1508 form an IV repeat; the sequence is NQHQYKVWYV…LFVAVVMDNF (274 aa). Residues 1249–1270 traverse the membrane as a helical segment; sequence YFEYLMFVLILLNTICLAMQHY. Residues 1271–1278 lie on the Extracellular side of the membrane; the sequence is GQSCLFKI. A helical transmembrane segment spans residues 1279 to 1300; the sequence is AMNILNMLFTGLFTVEMILKLI. The Cytoplasmic portion of the chain corresponds to 1301-1310; that stretch reads AFKPKHYFCD. Residues 1311 to 1330 traverse the membrane as a helical segment; that stretch reads AWNTFDALIVVGSIVDIAIT. The Extracellular portion of the chain corresponds to 1331-1353; that stretch reads EVNPAEHTQCSPSMNAEENSRIS. The helical transmembrane segment at 1354 to 1372 threads the bilayer; the sequence is ITFFRLFRVMRLVKLLSRG. Residues 1373–1390 lie on the Cytoplasmic side of the membrane; the sequence is EGIRTLLWTFIKSFQALP. The chain crosses the membrane as a helical span at residues 1391–1411; it reads YVALLIVMLFFIYAVIGMQVF. The Extracellular segment spans residues 1412–1433; sequence GKIALNDTTEINRNNNFQTFPQ. Asn-1417 is a glycosylation site (N-linked (GlcNAc...) asparagine). The pore-forming intramembrane region spans 1434–1452; sequence AVLLLFRCATGEAWQDIML. The Selectivity filter of repeat IV signature appears at 1443–1446; that stretch reads TGEA. The Extracellular segment spans residues 1453 to 1480; sequence ACMPGKKCAPESDPSNSTEGETPCGSSF. The interval 1459–1527 is dihydropyridine binding; it reads KCAPESDPSN…LGPHHLDEFK (69 aa). Cys-1460 and Cys-1476 form a disulfide bridge. The N-linked (GlcNAc...) asparagine glycan is linked to Asn-1468. Residues 1473–1515 form a phenylalkylamine binding region; the sequence is ETPCGSSFAVFYFISFYMLCAFLIINLFVAVVMDNFDYLTRDW. A helical membrane pass occupies residues 1481–1505; sequence AVFYFISFYMLCAFLIINLFVAVVM. At 1506-2169 the chain is on the cytoplasmic side; sequence DNFDYLTRDW…ADSRVHVRSL (664 aa). Residues 1640-1667 form an important for interaction with STAC1, STAC2 and STAC3 region; it reads DEVTVGKFYATFLIQEYFRKFKKRKEQG. The segment at 1646–1666 is calmodulin-binding IQ region; sequence KFYATFLIQEYFRKFKKRKEQ. The segment at 1680–1699 is important for localization in at the junctional membrane; the sequence is LQAGLRTLHDIGPEIRRAIS. Phosphoserine occurs at positions 1699 and 1720. Disordered stretches follow at residues 1761–1793 and 1894–1920; these read KAGNNQGDTESPSHEKLVDSTFTPSSYSSTGSN and ENRQLTPPEEDKGDTRPSPKKGFLRSA. Residues 1780-1792 are compositionally biased toward polar residues; that stretch reads STFTPSSYSSTGS. Over residues 1894–1910 the composition is skewed to basic and acidic residues; the sequence is ENRQLTPPEEDKGDTRP. The residue at position 1927 (Ser-1927) is a Phosphoserine.

Belongs to the calcium channel alpha-1 subunit (TC 1.A.1.11) family. CACNA1C subfamily. As to quaternary structure, component of a calcium channel complex consisting of a pore-forming alpha subunit (CACNA1C) and ancillary beta, gamma and delta subunits. The channel complex contains alpha, beta, gamma and delta subunits in a 1:1:1:1 ratio, i.e. it contains only one of each type of subunit. CACNA1C channel activity is modulated by ancillary subunits, such as CACNB1, CACNB2, CACNB3, CACNA2D1 and CACNA2D4. Interacts with CACNB1. Interacts with CACNB2. Identified in a complex with CACNA2D4 and CACNB3. Interacts with CACNB3. Interacts with CACNA2D1. Interacts with CACNA2D4. Interacts with the gamma subunits CACNG4, CACNG6, CACNG7 and CACNG8. Interacts with CALM1. Interacts (via the N-terminus and the C-terminal C and IQ motifs) with CABP1; this inhibits Ca(2+)-dependent channel inactivation. The binding via the C motif is calcium independent whereas the binding via IQ requires the presence of calcium and is mutually exclusive with calmodulin binding. The binding to the cytoplasmic N-terminal domain is calcium independent but is essential for the channel modulation. Interacts (via C-terminal CDB motif) with CABP5; in a calcium-dependent manner. Interacts with CIB1; the interaction increases upon cardiomyocytes hypertrophy. Interacts with STAC2 and STAC3; this inhibits channel inactivation. Post-translationally, phosphorylation by PKA at Ser-1927 activates the channel. Elevated levels of blood glucose lead to increased phosphorylation by PKA. Expressed in heart. Expressed in uterus.

Its subcellular location is the cell membrane. It localises to the sarcolemma. It is found in the perikaryon. The protein localises to the postsynaptic density membrane. The protein resides in the cell projection. Its subcellular location is the dendrite. It localises to the T-tubule. The enzyme catalyses Ca(2+)(in) = Ca(2+)(out). Its activity is regulated as follows. Inhibited by dihydropyridines (DHP), such as isradipine. Inhibited by nifedipine. Channel activity is regulated by Ca(2+) and calmodulin. Binding of STAC1, STAC2 or STAC3 to a region that overlaps with the calmodulin binding site inhibits channel inactivation by Ca(2+) and calmodulin. Binding of calmodulin or CABP1 at the same regulatory sites results in opposite effects on the channel function. Shear stress and pressure increases calcium channel activity. In terms of biological role, pore-forming, alpha-1C subunit of the voltage-gated calcium channel that gives rise to L-type calcium currents. Mediates influx of calcium ions into the cytoplasm, and thereby triggers calcium release from the sarcoplasm. Plays an important role in excitation-contraction coupling in the heart. Required for normal heart development and normal regulation of heart rhythm. Required for normal contraction of smooth muscle cells in blood vessels and in the intestine. Essential for normal blood pressure regulation via its role in the contraction of arterial smooth muscle cells. Long-lasting (L-type) calcium channels belong to the 'high-voltage activated' (HVA) group. This chain is Voltage-dependent L-type calcium channel subunit alpha-1C (CACNA1C), found in Cavia porcellus (Guinea pig).